Reading from the N-terminus, the 478-residue chain is Aspartyl/glutamyl-tRNA(Asn/Gln) amidotransferase subunit B 1 (478 aa).

It belongs to the GatB/GatE family. GatB subfamily. In terms of assembly, heterotrimer of A, B and C subunits.

It catalyses the reaction L-glutamyl-tRNA(Gln) + L-glutamine + ATP + H2O = L-glutaminyl-tRNA(Gln) + L-glutamate + ADP + phosphate + H(+). The catalysed reaction is L-aspartyl-tRNA(Asn) + L-glutamine + ATP + H2O = L-asparaginyl-tRNA(Asn) + L-glutamate + ADP + phosphate + 2 H(+). Functionally, allows the formation of correctly charged Asn-tRNA(Asn) or Gln-tRNA(Gln) through the transamidation of misacylated Asp-tRNA(Asn) or Glu-tRNA(Gln) in organisms which lack either or both of asparaginyl-tRNA or glutaminyl-tRNA synthetases. The reaction takes place in the presence of glutamine and ATP through an activated phospho-Asp-tRNA(Asn) or phospho-Glu-tRNA(Gln). In Syntrophus aciditrophicus (strain SB), this protein is Aspartyl/glutamyl-tRNA(Asn/Gln) amidotransferase subunit B 1.